The primary structure comprises 902 residues: Cytosolic carboxypeptidase 2 (902 aa).

The Peptidase M14 domain occupies 396–666 (YPYTYTDLQC…HVCDTLLDFC (271 aa)). Zn(2+) contacts are provided by His462, Glu465, and His558. The Proton donor/acceptor role is filled by Glu630. A compositionally biased stretch (basic residues) spans 746–758 (FKKKKKKSLQTRK). Disordered regions lie at residues 746 to 770 (FKKK…KNLM) and 796 to 879 (FKNS…PRSR). The span at 853–866 (VSCSPKRTINSSQE) shows a compositional bias: polar residues.

The protein belongs to the peptidase M14 family. Interacts with RARRES1, KIF11 AND MAPRE1. The cofactor is Zn(2+).

The protein localises to the cytoplasm. It is found in the cytosol. It localises to the cytoskeleton. The protein resides in the microtubule organizing center. Its subcellular location is the centrosome. The protein localises to the centriole. It is found in the cilium basal body. The catalysed reaction is (L-glutamyl)(n+1)-gamma-L-glutamyl-L-glutamyl-[protein] + H2O = (L-glutamyl)(n)-gamma-L-glutamyl-L-glutamyl-[protein] + L-glutamate. With respect to regulation, inhibited by RARRES1. Metallocarboxypeptidase that mediates deglutamylation of tubulin and non-tubulin target proteins. Catalyzes the removal of polyglutamate side chains present on the gamma-carboxyl group of glutamate residues within the C-terminal tail of tubulin protein. Specifically cleaves tubulin long-side-chains, while it is not able to remove the branching point glutamate. Also catalyzes the removal of polyglutamate residues from the carboxy-terminus of non-tubulin proteins such as MYLK. This Homo sapiens (Human) protein is Cytosolic carboxypeptidase 2.